We begin with the raw amino-acid sequence, 591 residues long: Aspartate--tRNA ligase (591 aa).

Glu-171 serves as a coordination point for L-aspartate. The tract at residues 195 to 198 (QLFK) is aspartate. Arg-217 contacts L-aspartate. ATP is bound by residues 217 to 219 (RDE) and Gln-226. His-448 serves as a coordination point for L-aspartate. Glu-482 is a binding site for ATP. Position 489 (Arg-489) interacts with L-aspartate. 534–537 (GLDR) is a binding site for ATP.

This sequence belongs to the class-II aminoacyl-tRNA synthetase family. Type 1 subfamily. As to quaternary structure, homodimer.

Its subcellular location is the cytoplasm. The catalysed reaction is tRNA(Asp) + L-aspartate + ATP = L-aspartyl-tRNA(Asp) + AMP + diphosphate. Its function is as follows. Catalyzes the attachment of L-aspartate to tRNA(Asp) in a two-step reaction: L-aspartate is first activated by ATP to form Asp-AMP and then transferred to the acceptor end of tRNA(Asp). This chain is Aspartate--tRNA ligase, found in Aliivibrio fischeri (strain MJ11) (Vibrio fischeri).